The sequence spans 380 residues: Cytochrome b (380 aa).

Helical transmembrane passes span Phe-33 to Met-53, Trp-77 to Ile-98, Trp-113 to Leu-133, and Phe-178 to Leu-198. Heme b is bound by residues His-83 and His-97. Residues His-182 and His-196 each contribute to the heme b site. His-201 is a binding site for a ubiquinone. Helical transmembrane passes span Ile-226–Ser-246, Leu-288–His-308, Leu-320–Gly-340, and Phe-347–Pro-367.

Belongs to the cytochrome b family. As to quaternary structure, the cytochrome bc1 complex contains 11 subunits: 3 respiratory subunits (MT-CYB, CYC1 and UQCRFS1), 2 core proteins (UQCRC1 and UQCRC2) and 6 low-molecular weight proteins (UQCRH/QCR6, UQCRB/QCR7, UQCRQ/QCR8, UQCR10/QCR9, UQCR11/QCR10 and a cleavage product of UQCRFS1). This cytochrome bc1 complex then forms a dimer. It depends on heme b as a cofactor.

The protein localises to the mitochondrion inner membrane. Functionally, component of the ubiquinol-cytochrome c reductase complex (complex III or cytochrome b-c1 complex) that is part of the mitochondrial respiratory chain. The b-c1 complex mediates electron transfer from ubiquinol to cytochrome c. Contributes to the generation of a proton gradient across the mitochondrial membrane that is then used for ATP synthesis. This Gorilla gorilla gorilla (Western lowland gorilla) protein is Cytochrome b (MT-CYB).